Reading from the N-terminus, the 386-residue chain is Probable magnesium transporter NIPA5 (386 aa).

Residues 1-18 (MVYSSGSWRDAYKGMSSD) are Extracellular-facing. A helical membrane pass occupies residues 19–39 (NVKGLVLALSSSIFIGASFIV). Residues 40-61 (KKKGLKKAGASGLRAGSGGYSY) are Cytoplasmic-facing. 2 helical membrane-spanning segments follow: residues 62-82 (LLEPLWWIGMITMIVGEIANF) and 83-103 (AAYAFAPAILVTPLGALSIII). Residues 104-115 (SASLAHIILQEK) lie on the Cytoplasmic side of the membrane. Residues 116-136 (LHTFGILGCALCIVGSVTIVL) form a helical membrane-spanning segment. Residues 137-157 (HAPQEQDIVSVLEVWNLATEP) lie on the Extracellular side of the membrane. A helical transmembrane segment spans residues 158–178 (AFLFYAAAVVGAAIVLIVQFI). At 179 to 189 (PLYGQSHVMVY) the chain is on the cytoplasmic side. Residues 190 to 210 (IGVCSLIGSLSVMSVKALGIA) traverse the membrane as a helical segment. Over 211-220 (LKLTFSGTNQ) the chain is Extracellular. A helical transmembrane segment spans residues 221 to 241 (LGYPQTWVFTVIVLFCVITQM). At 242–255 (NYLNKALDTFNTAV) the chain is on the cytoplasmic side. Residues 256-276 (VSPIYYVMFTSLTILASVIMF) traverse the membrane as a helical segment. Over 277-283 (KDWDRQS) the chain is Extracellular. Residues 284–304 (GTQIMTELCGFVTILSGTFLL) traverse the membrane as a helical segment. Topologically, residues 305 to 386 (HTTTDMVDGE…LRRQESSLRS (82 aa)) are cytoplasmic. A disordered region spans residues 352 to 386 (RQESAKSPRPARQNKQLEDDLEAVPLRRQESSLRS). Basic and acidic residues predominate over residues 376–386 (PLRRQESSLRS).

This sequence belongs to the NIPA (TC 2.A.7) family. In terms of assembly, homodimer.

The protein resides in the cell membrane. It is found in the early endosome. Its function is as follows. Acts as a Mg(2+) transporter. Can also transport other divalent cations such as Fe(2+), Sr(2+), Ba(2+), Mn(2+) and Co(2+) but to a much less extent than Mg(2+). This Arabidopsis thaliana (Mouse-ear cress) protein is Probable magnesium transporter NIPA5.